The sequence spans 320 residues: o-succinylbenzoate synthase (320 aa).

Lysine 133 (proton donor) is an active-site residue. Mg(2+) contacts are provided by aspartate 161, glutamate 190, and aspartate 213. Lysine 235 (proton acceptor) is an active-site residue.

The protein belongs to the mandelate racemase/muconate lactonizing enzyme family. MenC type 1 subfamily. A divalent metal cation is required as a cofactor.

It catalyses the reaction (1R,6R)-6-hydroxy-2-succinyl-cyclohexa-2,4-diene-1-carboxylate = 2-succinylbenzoate + H2O. It functions in the pathway quinol/quinone metabolism; 1,4-dihydroxy-2-naphthoate biosynthesis; 1,4-dihydroxy-2-naphthoate from chorismate: step 4/7. Its pathway is quinol/quinone metabolism; menaquinone biosynthesis. Functionally, converts 2-succinyl-6-hydroxy-2,4-cyclohexadiene-1-carboxylate (SHCHC) to 2-succinylbenzoate (OSB). This chain is o-succinylbenzoate synthase, found in Escherichia coli O157:H7.